We begin with the raw amino-acid sequence, 402 residues long: Phosphoglycerate kinase (402 aa).

Substrate is bound by residues 24 to 26, Arg40, 63 to 66, Arg122, and Arg155; these read DFN and HFGR. Residues Lys206, Gly297, Glu328, and 358 to 361 contribute to the ATP site; that span reads GGDS.

The protein belongs to the phosphoglycerate kinase family. In terms of assembly, monomer.

The protein localises to the cytoplasm. The catalysed reaction is (2R)-3-phosphoglycerate + ATP = (2R)-3-phospho-glyceroyl phosphate + ADP. The protein operates within carbohydrate degradation; glycolysis; pyruvate from D-glyceraldehyde 3-phosphate: step 2/5. The chain is Phosphoglycerate kinase from Prochlorococcus marinus (strain MIT 9312).